Reading from the N-terminus, the 455-residue chain is Chromosomal replication initiator protein DnaA (455 aa).

Residues 1-74 form a domain I, interacts with DnaA modulators region; it reads MFDIEKFWQH…IQSAYGYAGI (74 aa). Residues 74 to 117 form a domain II region; sequence IEILPVFQINENNDSPERIVTPEPRYAIQLQQEKRAHKQFTKNL. A domain III, AAA+ region region spans residues 118 to 334; that stretch reads KLNEKYTFDN…GALVKVQAYA (217 aa). Residues Gly-162, Gly-164, Lys-165, and Thr-166 each contribute to the ATP site. The interval 335–455 is domain IV, binds dsDNA; that stretch reads TIERADINVN…VFDLKQMIEH (121 aa).

It belongs to the DnaA family. In terms of assembly, oligomerizes as a right-handed, spiral filament on DNA at oriC.

It is found in the cytoplasm. Functionally, plays an essential role in the initiation and regulation of chromosomal replication. ATP-DnaA binds to the origin of replication (oriC) to initiate formation of the DNA replication initiation complex once per cell cycle. Binds the DnaA box (a 9 base pair repeat at the origin) and separates the double-stranded (ds)DNA. Forms a right-handed helical filament on oriC DNA; dsDNA binds to the exterior of the filament while single-stranded (ss)DNA is stabiized in the filament's interior. The ATP-DnaA-oriC complex binds and stabilizes one strand of the AT-rich DNA unwinding element (DUE), permitting loading of DNA polymerase. After initiation quickly degrades to an ADP-DnaA complex that is not apt for DNA replication. Binds acidic phospholipids. This is Chromosomal replication initiator protein DnaA from Lactobacillus helveticus (strain DPC 4571).